Reading from the N-terminus, the 385-residue chain is Interleukin-13 receptor subunit alpha-2 (385 aa).

Residues 1 to 23 (MALMAVNTRCLCLFLLCTITGHS) form the signal peptide. Residues 24 to 336 (LEIKVNPPQD…WEGYTGPDSK (313 aa)) lie on the Extracellular side of the membrane. 3 Fibronectin type-III domains span residues 30–130 (PPQD…ADEG), 133–221 (GTKI…PIRS), and 236–334 (PPEF…TGPD). Cys61 and Cys109 are oxidised to a cystine. Asn111 is a glycosylation site (N-linked (GlcNAc...) asparagine). Cys141 and Cys151 are oxidised to a cystine. An N-linked (GlcNAc...) asparagine glycan is attached at Asn164. Cys180 and Cys193 are joined by a disulfide. N-linked (GlcNAc...) asparagine glycans are attached at residues Asn211 and Asn295. Cys265 and Cys312 are joined by a disulfide. The short motif at 318–322 (WSEWS) is the WSXWS motif element. A helical membrane pass occupies residues 337 to 357 (IVFIVPVCLFFIFLLLLLCLI). At 358–385 (VEKEDPEPTLSLHVDLNKEMYAYEETLC) the chain is on the cytoplasmic side.

The protein belongs to the type I cytokine receptor family. Type 5 subfamily. Interacts with IL4RA. Interacts with high affinity to interleukin-13 (IL13), but not to interleukin-4 (IL4). In terms of processing, cleaved by MMP8 leading to a soluble form that is also able to interact with IL13.

The protein resides in the cell membrane. Cell surface receptor that plays a role in the regulation of IL-13-mediated responses. Functions as a decoy receptor that inhibits IL-13- and IL-4-mediated signal transduction via the JAK-STAT pathway and thereby modulates immune responses and inflammation. Serves as a functional signaling receptor for IL-13 in an alternative pathway involving AP-1 ultimately leading to the production of TGFB1. This is Interleukin-13 receptor subunit alpha-2 (Il13ra2) from Rattus norvegicus (Rat).